Here is a 263-residue protein sequence, read N- to C-terminus: Aquaporin-8 (263 aa).

Residues 1–38 lie on the Cytoplasmic side of the membrane; it reads MSGEQTPMCSMDLREIKGKETNMADSYHGMSWYEQYIQ. A helical membrane pass occupies residues 39-59; the sequence is PCVVELLGSALFIFIGCLSVI. Cys-55 carries the post-translational modification Cysteine persulfide. Cys-55 is subject to Cysteine sulfenic acid (-SOH). At 60-86 the chain is on the extracellular side; it reads ENSPNTGLLQPALAHGLALGLIIATLG. A helical membrane pass occupies residues 87-107; it reads NISGGHFNPAVSLAVTLVGGL. The short motif at 94 to 96 is the NPA 1 element; sequence NPA. Over 108–109 the chain is Cytoplasmic; the sequence is KT. Residues 110–130 form a helical membrane-spanning segment; it reads MLLIPYWVSQLFGGMIGAALA. Over 131–158 the chain is Extracellular; it reads KVVSPEERFWNASGAAFAIVQEQEQVAE. N-linked (GlcNAc...) asparagine glycosylation is present at Asn-141. The chain crosses the membrane as a helical span at residues 159–179; that stretch reads ALGVEIVMTMLLVLAVCMGAV. The Cytoplasmic segment spans residues 180 to 185; the sequence is NEKTMG. The chain crosses the membrane as a helical span at residues 186–206; sequence PLAPFSIGFSVIVDILAGGGI. At 207 to 230 the chain is on the extracellular side; the sequence is SGACMNPARAFGPAVMAGYWDFHW. An NPA 2 motif is present at residues 212–214; that stretch reads NPA. Residues 231–251 form a helical membrane-spanning segment; sequence IYWLGPLLAGLFVGLLIRLFI. The Cytoplasmic segment spans residues 252 to 263; that stretch reads GDEKTRLILKSR.

It belongs to the MIP/aquaporin (TC 1.A.8) family. In terms of processing, N-glycosylated. Sulfenylation at Cys-55(C55-SOH) when hydrogen peroxide flows through the AQP8 channel, making it susceptible to hydrogen sulfide produced by CBS. Post-translationally, persulfidation at Cys-55 is required to gate AQP8 channel; under stress condition, hydrogen peroxide accumulates in the cell leading to CBS activation that produces hydrogen sulfide inducing persulfidation of oxidized Cys-55 (C55-SOH). In terms of tissue distribution, highly expressed in sperm, pancreas and liver. Expressed in hepatocytes, acinal cells of pancreas and salivary gland, and absorptive colonic epithelial cells. Expressed in the myoepithelium of submandibular and parotid glands. Expressed in pancreatic beta-cells. Expressed in testis but not in epididymis. Expressed in small intestine.

It is found in the cell membrane. It localises to the mitochondrion inner membrane. The protein localises to the apical cell membrane. Its subcellular location is the basolateral cell membrane. The protein resides in the smooth endoplasmic reticulum membrane. The catalysed reaction is H2O(in) = H2O(out). It carries out the reaction NH4(+)(in) = NH4(+)(out). It catalyses the reaction H2O2(out) = H2O2(in). The enzyme catalyses formamide(out) = formamide(in). The catalysed reaction is methylamine(out) = methylamine(in). Reversibly gated by a two-step sulfenylation-persulfidation process in cells undergoing diverse stresses. Functionally, channel that allows the facilitated permeation of water and uncharged molecules, such as hydrogen peroxide and the neutral form of ammonia (NH3), through cellular membranes such as plasma membrane, inner mitochondrial membrane and endoplasmic reticulum membrane of several tissues. The transport of ammonia neutral form induces a parallel transport of proton, at alkaline pH when the concentration of ammonia is high. However, it is unclear whether the transport of proton takes place via the aquaporin or via an endogenous pathway. Also, may transport ammonia analogs such as formamide and methylamine, a transport favourited at basic pH due to the increase of unprotonated (neutral) form, which is expected to favor diffusion. Does not transport urea or glycerol. The water transport mechanism is mercury- and copper-sensitive and passive in response to osmotic driving forces. At the canicular plasma membrane, mediates the osmotic transport of water toward the bile canaliculus and facilitates the cAMP-induced bile canalicular water secretion, a process involved in bile formation. In addition, mediates the hydrogen peroxide release from hepatocyte mitochondria that modulates the SREBF2-mediated cholesterol synthesis and facilitates the mitochondrial ammonia uptake which is metabolized into urea, mainly under glucagon stimulation. In B cells, transports the CYBB-generated hydrogen peroxide from the external leaflet of the plasma membrane to the cytosol to promote B cell activation and differentiation for signal amplification. In the small intestine and colon system, mediates water transport through mitochondria and apical membrane of epithelial cells. May play an important role in the adaptive response of proximal tubule cells to acidosis possibly facilitating mitochondrial ammonia transport. The polypeptide is Aquaporin-8 (Rattus norvegicus (Rat)).